The sequence spans 346 residues: tRNA N6-adenosine threonylcarbamoyltransferase (346 aa).

Fe cation is bound by residues histidine 117 and histidine 121. Substrate-binding positions include 139 to 143 (QVSGG), aspartate 172, glycine 185, aspartate 189, and asparagine 278. Aspartate 308 serves as a coordination point for Fe cation.

Belongs to the KAE1 / TsaD family. Fe(2+) is required as a cofactor.

Its subcellular location is the cytoplasm. It catalyses the reaction L-threonylcarbamoyladenylate + adenosine(37) in tRNA = N(6)-L-threonylcarbamoyladenosine(37) in tRNA + AMP + H(+). Functionally, required for the formation of a threonylcarbamoyl group on adenosine at position 37 (t(6)A37) in tRNAs that read codons beginning with adenine. Is involved in the transfer of the threonylcarbamoyl moiety of threonylcarbamoyl-AMP (TC-AMP) to the N6 group of A37, together with TsaE and TsaB. TsaD likely plays a direct catalytic role in this reaction. This Lactobacillus delbrueckii subsp. bulgaricus (strain ATCC 11842 / DSM 20081 / BCRC 10696 / JCM 1002 / NBRC 13953 / NCIMB 11778 / NCTC 12712 / WDCM 00102 / Lb 14) protein is tRNA N6-adenosine threonylcarbamoyltransferase.